Here is a 312-residue protein sequence, read N- to C-terminus: tRNA-cytidine(32) 2-sulfurtransferase (312 aa).

A PP-loop motif motif is present at residues 39–44 (SGGKDS). C114, C117, and C205 together coordinate [4Fe-4S] cluster.

This sequence belongs to the TtcA family. As to quaternary structure, homodimer. The cofactor is Mg(2+). [4Fe-4S] cluster serves as cofactor.

The protein resides in the cytoplasm. It carries out the reaction cytidine(32) in tRNA + S-sulfanyl-L-cysteinyl-[cysteine desulfurase] + AH2 + ATP = 2-thiocytidine(32) in tRNA + L-cysteinyl-[cysteine desulfurase] + A + AMP + diphosphate + H(+). It functions in the pathway tRNA modification. Functionally, catalyzes the ATP-dependent 2-thiolation of cytidine in position 32 of tRNA, to form 2-thiocytidine (s(2)C32). The sulfur atoms are provided by the cysteine/cysteine desulfurase (IscS) system. The polypeptide is tRNA-cytidine(32) 2-sulfurtransferase (Ralstonia nicotianae (strain ATCC BAA-1114 / GMI1000) (Ralstonia solanacearum)).